We begin with the raw amino-acid sequence, 332 residues long: Anthranilate phosphoribosyltransferase (332 aa).

Residues Gly-78, 81–82, Ser-86, 88–91, 106–114, and Ser-118 each bind 5-phospho-alpha-D-ribose 1-diphosphate; these read GD, NIST, and KHGNKSITS. Gly-78 is an anthranilate binding site. Position 90 (Ser-90) interacts with Mg(2+). Asn-109 is an anthranilate binding site. Residue Arg-163 participates in anthranilate binding. Asp-222 and Glu-223 together coordinate Mg(2+).

This sequence belongs to the anthranilate phosphoribosyltransferase family. Homodimer. Mg(2+) is required as a cofactor.

It carries out the reaction N-(5-phospho-beta-D-ribosyl)anthranilate + diphosphate = 5-phospho-alpha-D-ribose 1-diphosphate + anthranilate. It functions in the pathway amino-acid biosynthesis; L-tryptophan biosynthesis; L-tryptophan from chorismate: step 2/5. Its function is as follows. Catalyzes the transfer of the phosphoribosyl group of 5-phosphorylribose-1-pyrophosphate (PRPP) to anthranilate to yield N-(5'-phosphoribosyl)-anthranilate (PRA). The polypeptide is Anthranilate phosphoribosyltransferase (Staphylococcus aureus (strain Mu3 / ATCC 700698)).